The primary structure comprises 404 residues: S-adenosylmethionine synthase (404 aa).

His17 is an ATP binding site. Position 19 (Asp19) interacts with Mg(2+). Glu45 lines the K(+) pocket. Residues Glu58 and Gln101 each coordinate L-methionine. A flexible loop region spans residues 101-111 (QSPDINRGVDR). Residues 172 to 174 (DAK), 246 to 247 (RF), Asp255, 261 to 262 (RK), Ala278, and Lys282 contribute to the ATP site. Asp255 contributes to the L-methionine binding site. Lys286 provides a ligand contact to L-methionine.

This sequence belongs to the AdoMet synthase family. In terms of assembly, homotetramer; dimer of dimers. Requires Mg(2+) as cofactor. It depends on K(+) as a cofactor.

It is found in the cytoplasm. The catalysed reaction is L-methionine + ATP + H2O = S-adenosyl-L-methionine + phosphate + diphosphate. The protein operates within amino-acid biosynthesis; S-adenosyl-L-methionine biosynthesis; S-adenosyl-L-methionine from L-methionine: step 1/1. Its function is as follows. Catalyzes the formation of S-adenosylmethionine (AdoMet) from methionine and ATP. The overall synthetic reaction is composed of two sequential steps, AdoMet formation and the subsequent tripolyphosphate hydrolysis which occurs prior to release of AdoMet from the enzyme. The sequence is that of S-adenosylmethionine synthase from Chlorobaculum tepidum (strain ATCC 49652 / DSM 12025 / NBRC 103806 / TLS) (Chlorobium tepidum).